The following is a 79-amino-acid chain: Conotoxin Kt6.1 (79 aa).

An N-terminal signal peptide occupies residues 1–22 (MKLTCVLIISVLFLTASQLITA). Residues 23-47 (VYSRDKQQYRAARLRDEMRNLKGAR) constitute a propeptide that is removed on maturation. 3 disulfide bridges follow: Cys49–Cys62, Cys56–Cys67, and Cys61–Cys77. Pro60 and Pro63 each carry 4-hydroxyproline.

Belongs to the conotoxin O1 superfamily. Expressed by the venom duct.

It is found in the secreted. Its function is as follows. Ion channel inhibitor that inhibits the increase in intracellular calcium upon depolarization in DRG neurons. In vivo, both intraperitoneal and intracranial injections into mice induce hyperactivity. The polypeptide is Conotoxin Kt6.1 (Conus kintoki (Cone snail)).